The chain runs to 797 residues: Protein tamozhennic (797 aa).

Positions glutamine 79–glycine 146 constitute a PUB domain. 2 disordered regions span residues alanine 515–leucine 570 and leucine 638–valine 697. Basic and acidic residues predominate over residues glutamate 662 to lysine 679. A RanBP2-type zinc finger spans residues isoleucine 735–aspartate 766.

Homomultimer. Binds to dl and msl-1 via their nuclear localization signal (NLS). Also binds to Ran, Ran-like and mbo.

The protein resides in the cytoplasm. Its function is as follows. Has an essential role during oogenesis and embryogenesis, perhaps in modulating the levels of nuclear import of additional proteins. Modulates the nuclear import of dorsal (dl), Dif and male specific lethal 1 (msl-1). Negatively regulates nuclear import of dl and controls the accumulation of dl in the nucleus after immune challenge. This chain is Protein tamozhennic (tamo), found in Drosophila melanogaster (Fruit fly).